The chain runs to 162 residues: Regulatory protein RecX (162 aa).

The protein belongs to the RecX family.

Its subcellular location is the cytoplasm. In terms of biological role, modulates RecA activity. This Xanthomonas campestris pv. campestris (strain 8004) protein is Regulatory protein RecX.